Reading from the N-terminus, the 120-residue chain is Large ribosomal subunit protein uL18 (120 aa).

Belongs to the universal ribosomal protein uL18 family. Part of the 50S ribosomal subunit; part of the 5S rRNA/L5/L18/L25 subcomplex. Contacts the 5S and 23S rRNAs.

This is one of the proteins that bind and probably mediate the attachment of the 5S RNA into the large ribosomal subunit, where it forms part of the central protuberance. In Brevibacillus brevis (strain 47 / JCM 6285 / NBRC 100599), this protein is Large ribosomal subunit protein uL18.